A 597-amino-acid chain; its full sequence is Arginine--tRNA ligase (597 aa).

A 'HIGH' region motif is present at residues 138-148 (ANPTGPMHVGH).

The protein belongs to the class-I aminoacyl-tRNA synthetase family. As to quaternary structure, monomer.

It is found in the cytoplasm. The enzyme catalyses tRNA(Arg) + L-arginine + ATP = L-arginyl-tRNA(Arg) + AMP + diphosphate. The polypeptide is Arginine--tRNA ligase (Nitrobacter hamburgensis (strain DSM 10229 / NCIMB 13809 / X14)).